Here is a 118-residue protein sequence, read N- to C-terminus: Vitelline membrane protein Vm32E (118 aa).

A signal peptide spans M1–A17. In terms of domain architecture, VM spans G36–T75.

It belongs to the vitelline membrane family.

The protein localises to the secreted. Its function is as follows. Major early eggshell protein. This chain is Vitelline membrane protein Vm32E, found in Drosophila mauritiana (Fruit fly).